The primary structure comprises 522 residues: 2-isopropylmalate synthase (522 aa).

Positions 5 to 267 (VIIFDTTLRD…HTRINHQEIY (263 aa)) constitute a Pyruvate carboxyltransferase domain. Residues Asp-14, His-202, His-204, and Asn-238 each coordinate Mn(2+). Residues 392–522 (RLDTFNVQSG…SQVKDQKETV (131 aa)) form a regulatory domain region.

The protein belongs to the alpha-IPM synthase/homocitrate synthase family. LeuA type 1 subfamily. Homodimer. It depends on Mn(2+) as a cofactor.

The protein resides in the cytoplasm. The enzyme catalyses 3-methyl-2-oxobutanoate + acetyl-CoA + H2O = (2S)-2-isopropylmalate + CoA + H(+). The protein operates within amino-acid biosynthesis; L-leucine biosynthesis; L-leucine from 3-methyl-2-oxobutanoate: step 1/4. In terms of biological role, catalyzes the condensation of the acetyl group of acetyl-CoA with 3-methyl-2-oxobutanoate (2-ketoisovalerate) to form 3-carboxy-3-hydroxy-4-methylpentanoate (2-isopropylmalate). In Erwinia tasmaniensis (strain DSM 17950 / CFBP 7177 / CIP 109463 / NCPPB 4357 / Et1/99), this protein is 2-isopropylmalate synthase.